Reading from the N-terminus, the 151-residue chain is Large ribosomal subunit protein uL13 (151 aa).

It belongs to the universal ribosomal protein uL13 family. In terms of assembly, part of the 50S ribosomal subunit.

Its function is as follows. This protein is one of the early assembly proteins of the 50S ribosomal subunit, although it is not seen to bind rRNA by itself. It is important during the early stages of 50S assembly. This chain is Large ribosomal subunit protein uL13, found in Picosynechococcus sp. (strain ATCC 27264 / PCC 7002 / PR-6) (Agmenellum quadruplicatum).